A 378-amino-acid polypeptide reads, in one-letter code: Lipoyl synthase, mitochondrial (378 aa).

[4Fe-4S] cluster-binding residues include cysteine 109, cysteine 114, cysteine 120, cysteine 140, cysteine 144, cysteine 147, and serine 356. The Radical SAM core domain occupies 125 to 345 (ETGTATATIM…QTLGMEMGFR (221 aa)).

The protein belongs to the radical SAM superfamily. Lipoyl synthase family. It depends on [4Fe-4S] cluster as a cofactor.

Its subcellular location is the mitochondrion. It carries out the reaction [[Fe-S] cluster scaffold protein carrying a second [4Fe-4S](2+) cluster] + N(6)-octanoyl-L-lysyl-[protein] + 2 oxidized [2Fe-2S]-[ferredoxin] + 2 S-adenosyl-L-methionine + 4 H(+) = [[Fe-S] cluster scaffold protein] + N(6)-[(R)-dihydrolipoyl]-L-lysyl-[protein] + 4 Fe(3+) + 2 hydrogen sulfide + 2 5'-deoxyadenosine + 2 L-methionine + 2 reduced [2Fe-2S]-[ferredoxin]. Its pathway is protein modification; protein lipoylation via endogenous pathway; protein N(6)-(lipoyl)lysine from octanoyl-[acyl-carrier-protein]: step 2/2. Catalyzes the radical-mediated insertion of two sulfur atoms into the C-6 and C-8 positions of the octanoyl moiety bound to the lipoyl domains of lipoate-dependent enzymes, thereby converting the octanoylated domains into lipoylated derivatives. This is Lipoyl synthase, mitochondrial from Medicago truncatula (Barrel medic).